A 119-amino-acid polypeptide reads, in one-letter code: 5-hydroxyisourate hydrolase (119 aa).

Residues histidine 8, arginine 47, and tyrosine 116 each coordinate substrate.

This sequence belongs to the transthyretin family. 5-hydroxyisourate hydrolase subfamily. As to quaternary structure, homotetramer.

The catalysed reaction is 5-hydroxyisourate + H2O = 5-hydroxy-2-oxo-4-ureido-2,5-dihydro-1H-imidazole-5-carboxylate + H(+). It participates in purine metabolism; urate degradation; (S)-allantoin from urate: step 2/3. Functionally, catalyzes the hydrolysis of 5-hydroxyisourate (HIU) to 2-oxo-4-hydroxy-4-carboxy-5-ureidoimidazoline (OHCU). This Halalkalibacterium halodurans (strain ATCC BAA-125 / DSM 18197 / FERM 7344 / JCM 9153 / C-125) (Bacillus halodurans) protein is 5-hydroxyisourate hydrolase.